Consider the following 213-residue polypeptide: AN1-type zinc finger protein 5 (213 aa).

The A20-type zinc-finger motif lies at 8-42 (TPGPMLCSTGCGFYGNPRTNGMCSVCYKEHLQRQQ). Zn(2+)-binding residues include C14, C18, C30, and C33. The segment at 39–149 (QRQQNSGRMS…EEKAPELPKP (111 aa)) is disordered. Residues 40–75 (RQQNSGRMSPMGTASGSNSPTSDSASVQRADTSLNN) are compositionally biased toward polar residues. Phosphoserine is present on residues S48 and S58. The span at 120–138 (SEPVVTQPSPSVSQPSTSQ) shows a compositional bias: low complexity. The span at 139–148 (SEEKAPELPK) shows a compositional bias: basic and acidic residues. An AN1-type zinc finger spans residues 148–194 (KPKKNRCFMCRKKVGLTGFDCRCGNLFCGLHRYSDKHNCPYDYKAEA). Residues C154, C157, C168, C170, C175, H178, H184, and C186 each contribute to the Zn(2+) site. Position 209 is an N6-acetyllysine (K209).

In terms of assembly, interacts with ubiquitin and polyubiquitinated proteins. Identified in a heterotrimeric complex with ubiquitin and SQSTM1, where ZFAND5 and SQSTM1 both interact with the same ubiquitin molecule. Homooligomer and/or heterooligomer. Interacts (via A20-type domain) with IKBKG and RIPK1 and with TRAF6 (via AN1-type domain). As to expression, highly expressed in skeletal muscle. Expressed in fetal cochlea. Also expressed in infant brain, fetal heart, pancreatic islet, melanocyte, pineal gland, placenta, corneal stroma, and parathyroid tumor. Weakly expressed or undetectable in adult brain, heart, colon, thymus, spleen, kidney, liver, small intestine, placenta, lung and peripheral blood leukocytes. Expressed in rhabdomyosarcoma RD cells (at protein level).

The protein localises to the cytoplasm. In terms of biological role, involved in protein degradation via the ubiquitin-proteasome system. May act by anchoring ubiquitinated proteins to the proteasome. Plays a role in ubiquitin-mediated protein degradation during muscle atrophy. Plays a role in the regulation of NF-kappa-B activation and apoptosis. Inhibits NF-kappa-B activation triggered by overexpression of RIPK1 and TRAF6 but not of RELA. Also inhibits tumor necrosis factor (TNF), IL-1 and TLR4-induced NF-kappa-B activation in a dose-dependent manner. Overexpression sensitizes cells to TNF-induced apoptosis. Is a potent inhibitory factor for osteoclast differentiation. The sequence is that of AN1-type zinc finger protein 5 (ZFAND5) from Homo sapiens (Human).